The primary structure comprises 887 residues: Inter-alpha-trypsin inhibitor heavy chain H3 (887 aa).

The first 21 residues, 1–21 (MVTLWWPCLVLALLSGLETSG), serve as a signal peptide directing secretion. Residues 22–33 (FPRSPLRLLGKR) constitute a propeptide that is removed on maturation. Residues 29–158 (LLGKRSLPEG…KVIFELTYEE (130 aa)) form the VIT domain. Asn91 carries N-linked (GlcNAc...) asparagine glycosylation. In terms of domain architecture, VWFA spans 282–442 (PKNIAFVIDV…YNFLESLALE (161 aa)). N-linked (GlcNAc...) asparagine glycosylation occurs at Asn580. Asp647 bears the Aspartate 1-(chondroitin 4-sulfate)-ester mark. Positions 648–887 (PHFIIQVPGK…HTDYIVPSLF (240 aa)) are excised as a propeptide.

The protein belongs to the ITIH family. In terms of assembly, I-alpha-I plasma protease inhibitors are assembled from one or two heavy chains (HC) and one light chain, bikunin. Pre-alpha-inhibitor (P-alpha-I) is composed of ITIH3/HC3 and bikunin. In terms of processing, heavy chains are linked to bikunin via chondroitin 4-sulfate esterified to the alpha-carboxyl of the C-terminal aspartate after propeptide cleavage.

It localises to the secreted. May act as a carrier of hyaluronan in serum or as a binding protein between hyaluronan and other matrix protein, including those on cell surfaces in tissues to regulate the localization, synthesis and degradation of hyaluronan which are essential to cells undergoing biological processes. This is Inter-alpha-trypsin inhibitor heavy chain H3 (Itih3) from Rattus norvegicus (Rat).